Consider the following 723-residue polypeptide: Catalase-peroxidase (723 aa).

The tryptophyl-tyrosyl-methioninium (Trp-Tyr) (with M-238) cross-link spans 89–212 (WHSAGTYRTG…LAAVQMGLIY (124 aa)). His-90 functions as the Proton acceptor in the catalytic mechanism. The tryptophyl-tyrosyl-methioninium (Tyr-Met) (with W-89) cross-link spans 212-238 (YVNPEGPNGDPDPFAAAVDIRETFARM). His-253 serves as a coordination point for heme b.

Belongs to the peroxidase family. Peroxidase/catalase subfamily. In terms of assembly, homodimer or homotetramer. Requires heme b as cofactor. Formation of the three residue Trp-Tyr-Met cross-link is important for the catalase, but not the peroxidase activity of the enzyme.

The enzyme catalyses H2O2 + AH2 = A + 2 H2O. The catalysed reaction is 2 H2O2 = O2 + 2 H2O. Its function is as follows. Bifunctional enzyme with both catalase and broad-spectrum peroxidase activity. The sequence is that of Catalase-peroxidase from Shewanella baltica (strain OS185).